Consider the following 113-residue polypeptide: UPF0482 protein YnfB (113 aa).

An N-terminal signal peptide occupies residues 1–28 (MKITLSKRIDLLAFLLPCALALSTTVHA).

The protein belongs to the UPF0482 family.

The chain is UPF0482 protein YnfB from Escherichia coli O157:H7.